The primary structure comprises 253 residues: Testis-expressed protein 47 (253 aa).

The protein is Testis-expressed protein 47 (Tex47) of Mus musculus (Mouse).